We begin with the raw amino-acid sequence, 167 residues long: Peptide deformylase (167 aa).

Residues cysteine 90 and histidine 132 each coordinate Fe cation. The active site involves glutamate 133. Fe cation is bound at residue histidine 136.

This sequence belongs to the polypeptide deformylase family. Requires Fe(2+) as cofactor.

It carries out the reaction N-terminal N-formyl-L-methionyl-[peptide] + H2O = N-terminal L-methionyl-[peptide] + formate. Removes the formyl group from the N-terminal Met of newly synthesized proteins. Requires at least a dipeptide for an efficient rate of reaction. N-terminal L-methionine is a prerequisite for activity but the enzyme has broad specificity at other positions. This chain is Peptide deformylase, found in Dehalococcoides mccartyi (strain ATCC BAA-2100 / JCM 16839 / KCTC 5957 / BAV1).